A 337-amino-acid polypeptide reads, in one-letter code: GTPase Obg (337 aa).

The 159-residue stretch at 4-162 (SNFIDYVKVC…AWVILELKVL (159 aa)) folds into the Obg domain. The OBG-type G domain occupies 163–329 (ADVGLVGFPN…LKDLLWTTMN (167 aa)). GTP is bound by residues 169 to 176 (GFPNAGKS), 194 to 198 (FTTLA), 216 to 219 (DIPG), 283 to 286 (SKSD), and 310 to 312 (SSY). Residues serine 176 and threonine 196 each coordinate Mg(2+).

It belongs to the TRAFAC class OBG-HflX-like GTPase superfamily. OBG GTPase family. In terms of assembly, monomer. Mg(2+) serves as cofactor.

It localises to the cytoplasm. Functionally, an essential GTPase which binds GTP, GDP and possibly (p)ppGpp with moderate affinity, with high nucleotide exchange rates and a fairly low GTP hydrolysis rate. Plays a role in control of the cell cycle, stress response, ribosome biogenesis and in those bacteria that undergo differentiation, in morphogenesis control. The polypeptide is GTPase Obg (Cytophaga hutchinsonii (strain ATCC 33406 / DSM 1761 / CIP 103989 / NBRC 15051 / NCIMB 9469 / D465)).